A 127-amino-acid chain; its full sequence is Large ribosomal subunit protein bL12 (127 aa).

This sequence belongs to the bacterial ribosomal protein bL12 family. As to quaternary structure, homodimer. Part of the ribosomal stalk of the 50S ribosomal subunit. Forms a multimeric L10(L12)X complex, where L10 forms an elongated spine to which 2 to 4 L12 dimers bind in a sequential fashion. Binds GTP-bound translation factors.

Its function is as follows. Forms part of the ribosomal stalk which helps the ribosome interact with GTP-bound translation factors. Is thus essential for accurate translation. The protein is Large ribosomal subunit protein bL12 of Sinorhizobium fredii (strain NBRC 101917 / NGR234).